A 138-amino-acid polypeptide reads, in one-letter code: Putative pre-16S rRNA nuclease (138 aa).

It belongs to the YqgF nuclease family.

It localises to the cytoplasm. Could be a nuclease involved in processing of the 5'-end of pre-16S rRNA. In Caldicellulosiruptor saccharolyticus (strain ATCC 43494 / DSM 8903 / Tp8T 6331), this protein is Putative pre-16S rRNA nuclease.